A 227-amino-acid chain; its full sequence is PKHD-type hydroxylase A1S_0473 (227 aa).

A Fe2OG dioxygenase domain is found at 78–178 (KIIPPLFNRY…RFASFFWVQS (101 aa)). Fe cation is bound by residues histidine 96, aspartate 98, and histidine 159. Arginine 169 provides a ligand contact to 2-oxoglutarate.

It depends on Fe(2+) as a cofactor. Requires L-ascorbate as cofactor.

The chain is PKHD-type hydroxylase A1S_0473 from Acinetobacter baumannii (strain ATCC 17978 / DSM 105126 / CIP 53.77 / LMG 1025 / NCDC KC755 / 5377).